The sequence spans 546 residues: Cysteine--tRNA ligase (546 aa).

Residue Cys57 participates in Zn(2+) binding. The 'HIGH' region signature appears at 59–69 (ATVQSSPHIGH). Positions 211-236 (PSVDATGADKYNPVDPADASPDKHDP) are disordered. Positions 270, 295, and 299 each coordinate Zn(2+). The 'KMSKS' region signature appears at 326–330 (KMSKS). Lys329 serves as a coordination point for ATP.

The protein belongs to the class-I aminoacyl-tRNA synthetase family. As to quaternary structure, monomer. The cofactor is Zn(2+).

It is found in the cytoplasm. The enzyme catalyses tRNA(Cys) + L-cysteine + ATP = L-cysteinyl-tRNA(Cys) + AMP + diphosphate. The sequence is that of Cysteine--tRNA ligase from Bifidobacterium longum (strain NCC 2705).